Here is a 561-residue protein sequence, read N- to C-terminus: Sesquiterpene synthase 1 (561 aa).

Residues aspartate 313, aspartate 317, aspartate 458, and glutamate 466 each coordinate Mg(2+). A DDXXD motif motif is present at residues 313-317 (DDIYD).

The protein belongs to the terpene synthase family. Tpsa subfamily. Requires Mn(2+) as cofactor. Mg(2+) is required as a cofactor.

Its subcellular location is the cytoplasm. The enzyme catalyses (2E,6E)-farnesyl diphosphate = (1S,8aR)-delta-cadinene + diphosphate. It functions in the pathway secondary metabolite biosynthesis; terpenoid biosynthesis. Its function is as follows. Involved in the biosynthesis of delta-cadinene. This Thapsia garganica (Deadly carrot) protein is Sesquiterpene synthase 1 (STS1).